A 184-amino-acid chain; its full sequence is MSDVLRPYRDLFPQIGQRVMIDDSSVVIGDVRLADDVGIWPLVVIRGDVHYVQIGARTNIQDGSMLHVTHKSSYNPDGNPLTIGEDVTVGHKVMLHGCTIGNRVLVGMGSILLDGAIVEDDVMIGAGSLVPQNKRLESGYLYLGSPVKQIRPLSDEEKAGLRYSANNYVKWKDEYLDQGNQTQP.

The protein belongs to the gamma-class carbonic anhydrase family.

This Escherichia coli (strain K12) protein is Protein YrdA (yrdA).